Here is a 322-residue protein sequence, read N- to C-terminus: MLNSFKLSLQYILPKLWLTRLAGWGASKRAGWLTKLVIDLFVKYYKVDMKEAQKPDTASYRTFNEFFVRPLRDEVRPIDTDPNVLVMPADGVISQLGKIEEDKILQAKGHNYSLEALLAGNYLMADLFRNGTFVTTYLSPRDYHRVHMPCNGILREMIYVPGDLFSVNHLTAQNVPNLFARNERVICLFDTEFGPMAQILVGATIVGSIETVWAGTITPPREGIIKRWTWPAGENDGSVALLKGQEMGRFKLGSTVINLFAPGKVDLVEQLESLSVTKIGQPLAVSTETFVTPDAEPAPLPAEEIEAEHDASPLIDDKKDQV.

Residues aspartate 90, histidine 147, and serine 254 each act as charge relay system; for autoendoproteolytic cleavage activity in the active site. The active-site Schiff-base intermediate with substrate; via pyruvic acid; for decarboxylase activity is the serine 254. Serine 254 is modified (pyruvic acid (Ser); by autocatalysis). The interval 293–322 (PDAEPAPLPAEEIEAEHDASPLIDDKKDQV) is disordered. Residues 308 to 322 (EHDASPLIDDKKDQV) are compositionally biased toward basic and acidic residues.

It belongs to the phosphatidylserine decarboxylase family. PSD-B subfamily. Prokaryotic type I sub-subfamily. As to quaternary structure, heterodimer of a large membrane-associated beta subunit and a small pyruvoyl-containing alpha subunit. Pyruvate serves as cofactor. Post-translationally, is synthesized initially as an inactive proenzyme. Formation of the active enzyme involves a self-maturation process in which the active site pyruvoyl group is generated from an internal serine residue via an autocatalytic post-translational modification. Two non-identical subunits are generated from the proenzyme in this reaction, and the pyruvate is formed at the N-terminus of the alpha chain, which is derived from the carboxyl end of the proenzyme. The autoendoproteolytic cleavage occurs by a canonical serine protease mechanism, in which the side chain hydroxyl group of the serine supplies its oxygen atom to form the C-terminus of the beta chain, while the remainder of the serine residue undergoes an oxidative deamination to produce ammonia and the pyruvoyl prosthetic group on the alpha chain. During this reaction, the Ser that is part of the protease active site of the proenzyme becomes the pyruvoyl prosthetic group, which constitutes an essential element of the active site of the mature decarboxylase.

The protein localises to the cell membrane. The enzyme catalyses a 1,2-diacyl-sn-glycero-3-phospho-L-serine + H(+) = a 1,2-diacyl-sn-glycero-3-phosphoethanolamine + CO2. It functions in the pathway phospholipid metabolism; phosphatidylethanolamine biosynthesis; phosphatidylethanolamine from CDP-diacylglycerol: step 2/2. In terms of biological role, catalyzes the formation of phosphatidylethanolamine (PtdEtn) from phosphatidylserine (PtdSer). In Escherichia coli O127:H6 (strain E2348/69 / EPEC), this protein is Phosphatidylserine decarboxylase proenzyme.